Reading from the N-terminus, the 96-residue chain is Co-chaperonin GroES (96 aa).

It belongs to the GroES chaperonin family. As to quaternary structure, heptamer of 7 subunits arranged in a ring. Interacts with the chaperonin GroEL.

It is found in the cytoplasm. Its function is as follows. Together with the chaperonin GroEL, plays an essential role in assisting protein folding. The GroEL-GroES system forms a nano-cage that allows encapsulation of the non-native substrate proteins and provides a physical environment optimized to promote and accelerate protein folding. GroES binds to the apical surface of the GroEL ring, thereby capping the opening of the GroEL channel. The sequence is that of Co-chaperonin GroES from Nitrosococcus oceani (strain ATCC 19707 / BCRC 17464 / JCM 30415 / NCIMB 11848 / C-107).